The chain runs to 250 residues: Kallikrein-9 (250 aa).

Residues 1-15 (MKLGLLCALLSLLAG) form the signal peptide. Residues 23–249 (AIGAEECRPN…YLDWIQEIME (227 aa)) form the Peptidase S1 domain. 6 disulfides stabilise this stretch: Cys29–Cys164, Cys48–Cys64, Cys136–Cys238, Cys143–Cys210, Cys175–Cys189, and Cys200–Cys225. Active-site charge relay system residues include His63 and Asp111. Asn131 and Asn166 each carry an N-linked (GlcNAc...) asparagine glycan. Catalysis depends on Ser204, which acts as the Charge relay system. N-linked (GlcNAc...) asparagine glycosylation is present at Asn211.

This sequence belongs to the peptidase S1 family. Kallikrein subfamily. In terms of tissue distribution, skin, thymus, trachea, cerebellum and spinal cord.

The protein resides in the secreted. The polypeptide is Kallikrein-9 (KLK9) (Homo sapiens (Human)).